Here is a 174-residue protein sequence, read N- to C-terminus: Gamma-crystallin S (174 aa).

Beta/gamma crystallin 'Greek key' domains are found at residues 2 to 40 (GRII…RVES) and 41 to 83 (GAWV…KMIH). Positions 84-89 (FVSGSE) are connecting peptide. 2 Beta/gamma crystallin 'Greek key' domains span residues 90-130 (YKIQ…KVLD) and 131-173 (GIWI…KRLM).

Belongs to the beta/gamma-crystallin family.

Functionally, crystallins are the dominant structural components of the vertebrate eye lens. The polypeptide is Gamma-crystallin S (crygs) (Cyprinus carpio (Common carp)).